Consider the following 246-residue polypeptide: 3-deoxy-manno-octulosonate cytidylyltransferase (246 aa).

This sequence belongs to the KdsB family.

It is found in the cytoplasm. The catalysed reaction is 3-deoxy-alpha-D-manno-oct-2-ulosonate + CTP = CMP-3-deoxy-beta-D-manno-octulosonate + diphosphate. It functions in the pathway nucleotide-sugar biosynthesis; CMP-3-deoxy-D-manno-octulosonate biosynthesis; CMP-3-deoxy-D-manno-octulosonate from 3-deoxy-D-manno-octulosonate and CTP: step 1/1. The protein operates within bacterial outer membrane biogenesis; lipopolysaccharide biosynthesis. Functionally, activates KDO (a required 8-carbon sugar) for incorporation into bacterial lipopolysaccharide in Gram-negative bacteria. The chain is 3-deoxy-manno-octulosonate cytidylyltransferase from Bradyrhizobium sp. (strain BTAi1 / ATCC BAA-1182).